Here is a 245-residue protein sequence, read N- to C-terminus: UPF0246 protein Ldb2075 (245 aa).

This sequence belongs to the UPF0246 family.

The chain is UPF0246 protein Ldb2075 from Lactobacillus delbrueckii subsp. bulgaricus (strain ATCC 11842 / DSM 20081 / BCRC 10696 / JCM 1002 / NBRC 13953 / NCIMB 11778 / NCTC 12712 / WDCM 00102 / Lb 14).